The following is a 139-amino-acid chain: Small ribosomal subunit protein uS12 (139 aa).

This sequence belongs to the universal ribosomal protein uS12 family. In terms of assembly, part of the 30S ribosomal subunit. Contacts proteins S8 and S17. May interact with IF1 in the 30S initiation complex.

With S4 and S5 plays an important role in translational accuracy. In terms of biological role, interacts with and stabilizes bases of the 16S rRNA that are involved in tRNA selection in the A site and with the mRNA backbone. Located at the interface of the 30S and 50S subunits, it traverses the body of the 30S subunit contacting proteins on the other side and probably holding the rRNA structure together. The combined cluster of proteins S8, S12 and S17 appears to hold together the shoulder and platform of the 30S subunit. This is Small ribosomal subunit protein uS12 from Mycoplasma pneumoniae (strain ATCC 29342 / M129 / Subtype 1) (Mycoplasmoides pneumoniae).